A 467-amino-acid chain; its full sequence is Prenyltransferase GME11375 (467 aa).

Residue E93 participates in L-tryptophan binding. Residues R108, K196, Y198, K266, Y268, and Y436 each coordinate dimethylallyl diphosphate.

This sequence belongs to the tryptophan dimethylallyltransferase family.

Its pathway is secondary metabolite biosynthesis. In terms of biological role, prenyltransferase; part of the gene cluster that mediates the biosynthesis of dibenzodioxocinones such as pestalotiollide B, a novel class of inhibitors against cholesterol ester transfer protein (CEPT). The biosynthesis initiates from condensation of acetate and malonate units catalyzed by the non-reducing PKS pks8/GME11356. Pks8/GME11356 lacks a thioesterase (TE) domain, which is important to the cyclizing of the third ring of atrochrysone carboxylic acid, and the esterase GME11355 might play the role of TE and catalyzes the cyclization reaction of the C ring. The lactamase-like protein GME11357 (or other beta-lactamases in Pestalotiopsis microspora) probably hydrolyzes the thioester bond between the ACP of pks8/GME11356 and the intermediate to release atrochrysone carboxylic acid, which is spontaneously dehydrates to form endocrocin anthrone. Endocrocin anthrone is further converted to emodin via the endocrocin intermediate. Emodin is then oxidized by several enzymes such as the Baeyer-Villiger oxidase GME11358, the oxidoreductase GME11367, the short chain dehydrogenase/reductase GME11373, as well as by other oxidoreductases from the cluster, to modify the A and C rings and open the B ring, and finally yield monodictyphenone. The prenyltransferase GME11375 may catalyze the addition reaction between the C5 side chains and the carbon bone of dibenzodioxocinones. The remaining biochemical reactions to the final product dibenzodioxocinones should be methylation catalyzed by methyltransferase GME11366 and reduction and lactonization reaction catalyzed by a series of oxidordeuctases. This Pestalotiopsis microspora protein is Prenyltransferase GME11375.